We begin with the raw amino-acid sequence, 618 residues long: Proline--tRNA ligase (618 aa).

Belongs to the class-II aminoacyl-tRNA synthetase family. ProS type 1 subfamily. As to quaternary structure, homodimer.

The protein resides in the cytoplasm. It carries out the reaction tRNA(Pro) + L-proline + ATP = L-prolyl-tRNA(Pro) + AMP + diphosphate. In terms of biological role, catalyzes the attachment of proline to tRNA(Pro) in a two-step reaction: proline is first activated by ATP to form Pro-AMP and then transferred to the acceptor end of tRNA(Pro). As ProRS can inadvertently accommodate and process non-cognate amino acids such as alanine and cysteine, to avoid such errors it has two additional distinct editing activities against alanine. One activity is designated as 'pretransfer' editing and involves the tRNA(Pro)-independent hydrolysis of activated Ala-AMP. The other activity is designated 'posttransfer' editing and involves deacylation of mischarged Ala-tRNA(Pro). The misacylated Cys-tRNA(Pro) is not edited by ProRS. This is Proline--tRNA ligase from Streptococcus pyogenes serotype M2 (strain MGAS10270).